A 383-amino-acid polypeptide reads, in one-letter code: Chorismate synthase (383 aa).

An NADP(+)-binding site is contributed by R48. FMN is bound by residues 125–127, G286, 301–305, and R328; these read RSS and HAPTS. Positions 361 to 383 are disordered; it reads PDRLDDNPGQYETEYHPSSPQTN.

Belongs to the chorismate synthase family. FMNH2 is required as a cofactor.

It carries out the reaction 5-O-(1-carboxyvinyl)-3-phosphoshikimate = chorismate + phosphate. Its pathway is metabolic intermediate biosynthesis; chorismate biosynthesis; chorismate from D-erythrose 4-phosphate and phosphoenolpyruvate: step 7/7. Functionally, catalyzes the anti-1,4-elimination of the C-3 phosphate and the C-6 proR hydrogen from 5-enolpyruvylshikimate-3-phosphate (EPSP) to yield chorismate, which is the branch point compound that serves as the starting substrate for the three terminal pathways of aromatic amino acid biosynthesis. This reaction introduces a second double bond into the aromatic ring system. The polypeptide is Chorismate synthase (Haloquadratum walsbyi (strain DSM 16790 / HBSQ001)).